We begin with the raw amino-acid sequence, 140 residues long: ATP synthase epsilon chain (140 aa).

This sequence belongs to the ATPase epsilon chain family. In terms of assembly, F-type ATPases have 2 components, CF(1) - the catalytic core - and CF(0) - the membrane proton channel. CF(1) has five subunits: alpha(3), beta(3), gamma(1), delta(1), epsilon(1). CF(0) has three main subunits: a, b and c.

The protein resides in the cell inner membrane. Produces ATP from ADP in the presence of a proton gradient across the membrane. In Bdellovibrio bacteriovorus (strain ATCC 15356 / DSM 50701 / NCIMB 9529 / HD100), this protein is ATP synthase epsilon chain.